A 507-amino-acid polypeptide reads, in one-letter code: Sperm-associated antigen 6 (507 aa).

8 ARM repeats span residues 31–70, 73–112, 115–154, 157–196, 199–238, 241–280, 325–365, and 402–441; these read PQNIETLQNAGVMSLLRPLLLDVVPTIQQTAALALGRLAN, DDLAEAVVKGDILPQLVYSLAEQNRFYKKAAAFVLRAVGK, PQLAQAIVDCGALDTLVICLEDFDPGVKEAAAWALGYIAR, TELSQAVVDAGAIPLLVLCIQEPEIALKRIAASALSDISK, PELAQTVVDAGAIAHLAQMILNPDAKLKRQVLSALSQIAK, VDLAEMVVEAEIFPVVLTCLKDKDEYVKKNACTLIREIAK, ENLA…QLGR, and KAIKNILQKCTYLPALEPFLYDAPPNILKHVVGQFSKVLP.

As to quaternary structure, interacts with SPAG16 and SPAG17. As to expression, highly expressed in testis. Not detected in prostate, ovary, spleen, thymus, small intestine, colon and peripheral blood leukocytes.

It localises to the cytoplasm. Its subcellular location is the cytoskeleton. The protein localises to the cell projection. The protein resides in the cilium. It is found in the flagellum. It localises to the cilium axoneme. In terms of biological role, important for structural integrity of the central apparatus in the sperm tail and for flagellar motility. The sequence is that of Sperm-associated antigen 6 (Spag6) from Mus musculus (Mouse).